The chain runs to 419 residues: Isocitrate dehydrogenase [NADP] (419 aa).

Residue Thr-102 participates in NADP(+) binding. Residues Ser-111, Asn-113, Arg-117, Arg-127, and Arg-151 each contribute to the D-threo-isocitrate site. Asp-306 contacts Mg(2+). Residues 338-344 (HGSAPKY), Asn-351, Tyr-390, and Arg-394 each bind NADP(+).

It belongs to the isocitrate and isopropylmalate dehydrogenases family. As to quaternary structure, homodimer. Mg(2+) serves as cofactor. Requires Mn(2+) as cofactor.

It carries out the reaction D-threo-isocitrate + NADP(+) = 2-oxoglutarate + CO2 + NADPH. Functionally, catalyzes the oxidative decarboxylation of isocitrate to 2-oxoglutarate and carbon dioxide with the concomitant reduction of NADP(+). This Haloferax volcanii (strain ATCC 29605 / DSM 3757 / JCM 8879 / NBRC 14742 / NCIMB 2012 / VKM B-1768 / DS2) (Halobacterium volcanii) protein is Isocitrate dehydrogenase [NADP].